We begin with the raw amino-acid sequence, 172 residues long: Transcriptional repressor NrdR (172 aa).

Residues 3 to 34 (CPYCRNTDTRVLDSRVADDGGSIRRRRTCSAC) fold into a zinc finger. The region spanning 46–136 (LTVLKRSGAS…VYRAFESADD (91 aa)) is the ATP-cone domain.

This sequence belongs to the NrdR family. Zn(2+) is required as a cofactor.

Negatively regulates transcription of bacterial ribonucleotide reductase nrd genes and operons by binding to NrdR-boxes. The protein is Transcriptional repressor NrdR of Nocardioides sp. (strain ATCC BAA-499 / JS614).